The following is a 134-amino-acid chain: Profilin-2 (134 aa).

C13 and C118 are joined by a disulfide. Positions 84 to 100 (AVIRGKKGSGGITIKKT) match the Involved in PIP2 interaction motif. Phosphothreonine is present on T114.

The protein belongs to the profilin family. In terms of processing, phosphorylated by MAP kinases.

It localises to the cytoplasm. The protein localises to the cytoskeleton. This is Profilin-2 from Olea europaea (Common olive).